The primary structure comprises 86 residues: Cell division topological specificity factor (86 aa).

The protein belongs to the MinE family.

Its function is as follows. Prevents the cell division inhibition by proteins MinC and MinD at internal division sites while permitting inhibition at polar sites. This ensures cell division at the proper site by restricting the formation of a division septum at the midpoint of the long axis of the cell. This chain is Cell division topological specificity factor, found in Rhizobium rhizogenes (strain K84 / ATCC BAA-868) (Agrobacterium radiobacter).